The primary structure comprises 491 residues: Keratin, type I cytoskeletal 24 (491 aa).

The disordered stretch occupies residues 1–23; the sequence is MFCSAQKGSCSSRVSSSGAVGSR. A head region spans residues 1 to 117; that stretch reads MFCSAQKGSC…GYDGGLLSGS (117 aa). The span at 8–23 shows a compositional bias: low complexity; it reads GSCSSRVSSSGAVGSR. A coil 1A region spans residues 118 to 153; that stretch reads EKQTMQGLNDRLANYLDKVRALEEANTDLETKIKDW. Residues 118–432 enclose the IF rod domain; sequence EKQTMQGLND…RLLNGDGGGC (315 aa). The segment at 154-174 is linker 1; that stretch reads YGRHGSGKDGPGRDYSQYCSV. Positions 175–266 are coil 1B; it reads IEDLKNQIIS…KNHEEEMKCL (92 aa). Residues 267-289 are linker 12; sequence QGSSGGDVTVEMNATPGTDLTKL. The tract at residues 290 to 428 is coil 2; the sequence is LNDMRAQYEA…ETYRRLLNGD (139 aa). The interval 429-491 is tail; the sequence is GGGCDYRNLV…VSNISEVKIK (63 aa).

It belongs to the intermediate filament family. In terms of assembly, heterotetramer of two type I and two type II keratins.

In Rattus norvegicus (Rat), this protein is Keratin, type I cytoskeletal 24 (Krt24).